The primary structure comprises 723 residues: MEHKPTHTSGQCPVMHGGATSSNSSNVAWWPKALNLDILHQHDRKSNPMGADFSYREELKKLDVEALKRDLKALMTDSQDWWPADWGHYGGLMIRMAWHSAGSYRVGDGRGGADTGNQRFAPLNSWPDNANLDKARRLLWPIKQKYGNKISWADLMILAGNMAYESMGLKTFGFAFGREDIWHPEKDIYWGAEQEWLAPSGAENSRYSGERDLENPLAAVMMGLIYVNPEGVDGNPDPLKTAKDMRVTFARMGMNDEETVALTAGGHTVGKAHGNGNAANLGADPESADLEEQGLGWNNHKSRGIGRDTVTSGIEGAWTTNPTQWDNGFFHLLFSYDWWLQKSPAGAWQWEPVNIKEEDKPVDVEDPTIRHNPIMTDADMALKLDPEYRKISERFHKDPAYFSETFARAWFKLTHRDMGPKARYFGPDVPVEELIWQDPVPTGRKDYDVDAVKAKIIASGLSTGELVSTAWDSARTFRNSDKRGGANGARIRLAPQKDWLGNEPEKLAKVLNVLEAIASEFNISVADTIVLAGNVGVEQAAKAAGIAITVPFAAGRGDATIEQTDVESFEVLEPIADGFRNWQKQHYAVNPEELLLDRAQLLGLSAPEMTVLIGGLRVIGTNHGDNKHGVFTDNVGALSNDFFVNLTDMRYTWKPTGRNSYDIVERNSGNVKWTATRVDLVFGSNSILRAYAEVYAQDDNKEKFVKDFVAAWTKVMNADRFDI.

Positions 98-226 (WHSAGSYRVG…LAAVMMGLIY (129 aa)) form a cross-link, tryptophyl-tyrosyl-methioninium (Trp-Tyr) (with M-252). The Proton acceptor role is filled by histidine 99. The segment at residues 226 to 252 (YVNPEGVDGNPDPLKTAKDMRVTFARM) is a cross-link (tryptophyl-tyrosyl-methioninium (Tyr-Met) (with W-98)). Residue histidine 267 coordinates heme b.

The protein belongs to the peroxidase family. Peroxidase/catalase subfamily. Homodimer or homotetramer. Heme b serves as cofactor. Formation of the three residue Trp-Tyr-Met cross-link is important for the catalase, but not the peroxidase activity of the enzyme.

The enzyme catalyses H2O2 + AH2 = A + 2 H2O. It carries out the reaction 2 H2O2 = O2 + 2 H2O. In terms of biological role, bifunctional enzyme with both catalase and broad-spectrum peroxidase activity. The polypeptide is Catalase-peroxidase (Vibrio vulnificus (strain YJ016)).